The sequence spans 961 residues: Probable inorganic carbon transporter subunit DabA (961 aa).

4 residues coordinate Zn(2+): Cys406, Asp408, His653, and Cys668.

This sequence belongs to the inorganic carbon transporter (TC 9.A.2) DabA family. In terms of assembly, forms a complex with DabB. The cofactor is Zn(2+).

It localises to the cell inner membrane. In terms of biological role, part of an energy-coupled inorganic carbon pump. The protein is Probable inorganic carbon transporter subunit DabA of Hydrogenobaculum sp. (strain Y04AAS1).